Here is a 297-residue protein sequence, read N- to C-terminus: Putative F-box protein At2g19630 (297 aa).

An F-box domain is found at 11–60 (TKNSLQIPIDLIIEIFLRLSVNSIARCRCVSKQWASTLSRPYFTELFLTR).

The sequence is that of Putative F-box protein At2g19630 from Arabidopsis thaliana (Mouse-ear cress).